The following is a 183-amino-acid chain: Large ribosomal subunit protein uL6 (183 aa).

It belongs to the universal ribosomal protein uL6 family. Part of the 50S ribosomal subunit.

In terms of biological role, this protein binds to the 23S rRNA, and is important in its secondary structure. It is located near the subunit interface in the base of the L7/L12 stalk, and near the tRNA binding site of the peptidyltransferase center. The sequence is that of Large ribosomal subunit protein uL6 from Chlamydia trachomatis serovar D (strain ATCC VR-885 / DSM 19411 / UW-3/Cx).